The following is a 245-amino-acid chain: uncharacterized protein (245 aa).

Transmembrane regions (helical) follow at residues 38-58 (IYPAFITVMALVSFIASAIFI), 68-88 (TIELAIAFLSNFYLGLTQGYF), 100-120 (IWSLAVEGQYYLIFPLILILA), 129-149 (VLFIITLILFFILLATSFVSA), 194-214 (VNNILAILSTLLLFSCLFLMN), and 217-237 (IAFIPGITLILPCIFTALIIH).

The protein belongs to the acyltransferase 3 family.

The protein resides in the cell membrane. This is an uncharacterized protein from Haemophilus influenzae (strain ATCC 51907 / DSM 11121 / KW20 / Rd).